Reading from the N-terminus, the 706-residue chain is Protein kinase C theta type (706 aa).

The 107-residue stretch at 1–107 folds into the C2 domain; the sequence is MSPFLRIGLS…KNNGKTEIWL (107 aa). Tyrosine 90 carries the phosphotyrosine; by LCK modification. The Phorbol-ester/DAG-type 1 zinc finger occupies 159-209; it reads CHEFTATFFPQPTFCSVCHEFVWGLNKQGYQCRQCNAAIHKKCIDKVIAKC. Phosphothreonine; by autocatalysis is present on threonine 219. A Phorbol-ester/DAG-type 2 zinc finger spans residues 231-281; sequence PHRFKVYNYKSPTFCEHCGTLLWGLARQGLKCDACGMNVHHRCQTKVANLC. Position 348 is a phosphoserine (serine 348). Residues 380-634 enclose the Protein kinase domain; sequence FILHKMLGKG…RGDIRQHPLF (255 aa). ATP contacts are provided by residues 386 to 394 and lysine 409; that span reads LGKGSFGKV. Aspartate 504 functions as the Proton acceptor in the catalytic mechanism. Residue threonine 538 is modified to Phosphothreonine; by PDPK1. Positions 635–706 constitute an AGC-kinase C-terminal domain; that stretch reads REINWEELER…MNPGMERLIS (72 aa). Phosphoserine is present on residues serine 676, serine 685, and serine 695.

It belongs to the protein kinase superfamily. AGC Ser/Thr protein kinase family. PKC subfamily. Part of a lipid raft complex composed at least of BCL10, CARD11, MALT1 and IKBKB. Interacts with GLRX3 (via N-terminus). Interacts with ECT2. Interacts with CCDC88A/GIV; the interaction leads to phosphorylation of CCDC88A and inhibition of its guanine nucleotide exchange factor activity. Interacts with PRKCH upstream open reading frame 2; the interaction leads to inhibition of kinase activity. Interacts with CD28. Mg(2+) is required as a cofactor. Autophosphorylation at Thr-219 is required for targeting to the TCR and cellular function of PRKCQ upon antigen receptor ligation. Following TCR stimulation, phosphorylated at Tyr-90 and Ser-685. In terms of tissue distribution, expressed in skeletal muscle, T-cells, megakaryoblastic cells and platelets.

It localises to the cytoplasm. It is found in the cell membrane. It carries out the reaction L-seryl-[protein] + ATP = O-phospho-L-seryl-[protein] + ADP + H(+). The catalysed reaction is L-threonyl-[protein] + ATP = O-phospho-L-threonyl-[protein] + ADP + H(+). Its activity is regulated as follows. Novel PKCs (PRKCD, PRKCE, PRKCH and PRKCQ) are calcium-insensitive, but activated by diacylglycerol (DAG) and phosphatidylserine. Three specific sites; Thr-538 (activation loop of the kinase domain), Ser-676 (turn motif) and Ser-695 (hydrophobic region), need to be phosphorylated for its full activation. Inhibited by PRKCH upstream open reading frame 2. Its function is as follows. Calcium-independent, phospholipid- and diacylglycerol (DAG)-dependent serine/threonine-protein kinase that mediates non-redundant functions in T-cell receptor (TCR) signaling, including T-cells activation, proliferation, differentiation and survival, by mediating activation of multiple transcription factors such as NF-kappa-B, JUN, NFATC1 and NFATC2. In TCR-CD3/CD28-co-stimulated T-cells, is required for the activation of NF-kappa-B and JUN, which in turn are essential for IL2 production, and participates in the calcium-dependent NFATC1 and NFATC2 transactivation. Mediates the activation of the canonical NF-kappa-B pathway (NFKB1) by direct phosphorylation of CARD11 on several serine residues, inducing CARD11 association with lipid rafts and recruitment of the BCL10-MALT1 complex, which then activates IKK complex, resulting in nuclear translocation and activation of NFKB1. May also play an indirect role in activation of the non-canonical NF-kappa-B (NFKB2) pathway. In the signaling pathway leading to JUN activation, acts by phosphorylating the mediator STK39/SPAK and may not act through MAP kinases signaling. Plays a critical role in TCR/CD28-induced NFATC1 and NFATC2 transactivation by participating in the regulation of reduced inositol 1,4,5-trisphosphate generation and intracellular calcium mobilization. After costimulation of T-cells through CD28 can phosphorylate CBLB and is required for the ubiquitination and subsequent degradation of CBLB, which is a prerequisite for the activation of TCR. During T-cells differentiation, plays an important role in the development of T-helper 2 (Th2) cells following immune and inflammatory responses, and, in the development of inflammatory autoimmune diseases, is necessary for the activation of IL17-producing Th17 cells. May play a minor role in Th1 response. Upon TCR stimulation, mediates T-cell protective survival signal by phosphorylating BAD, thus protecting T-cells from BAD-induced apoptosis, and by up-regulating BCL-X(L)/BCL2L1 levels through NF-kappa-B and JUN pathways. In platelets, regulates signal transduction downstream of the ITGA2B, CD36/GP4, F2R/PAR1 and F2RL3/PAR4 receptors, playing a positive role in 'outside-in' signaling and granule secretion signal transduction. May relay signals from the activated ITGA2B receptor by regulating the uncoupling of WASP and WIPF1, thereby permitting the regulation of actin filament nucleation and branching activity of the Arp2/3 complex. May mediate inhibitory effects of free fatty acids on insulin signaling by phosphorylating IRS1, which in turn blocks IRS1 tyrosine phosphorylation and downstream activation of the PI3K/AKT pathway. Phosphorylates MSN (moesin) in the presence of phosphatidylglycerol or phosphatidylinositol. Phosphorylates PDPK1 at 'Ser-504' and 'Ser-532' and negatively regulates its ability to phosphorylate PKB/AKT1. Phosphorylates CCDC88A/GIV and inhibits its guanine nucleotide exchange factor activity. Phosphorylates and activates LRRK1, which phosphorylates RAB proteins involved in intracellular trafficking. This chain is Protein kinase C theta type (PRKCQ), found in Homo sapiens (Human).